Consider the following 306-residue polypeptide: Glutaminase (306 aa).

7 residues coordinate substrate: Ser62, Asn114, Glu159, Asn166, Tyr190, Tyr242, and Val260.

The protein belongs to the glutaminase family. As to quaternary structure, homotetramer.

It catalyses the reaction L-glutamine + H2O = L-glutamate + NH4(+). This is Glutaminase from Clostridium tetani (strain Massachusetts / E88).